We begin with the raw amino-acid sequence, 295 residues long: Ethanolamine ammonia-lyase small subunit (295 aa).

3 residues coordinate adenosylcob(III)alamin: Val207, Glu228, and Cys258.

The protein belongs to the EutC family. In terms of assembly, the basic unit is a heterodimer which dimerizes to form tetramers. The heterotetramers trimerize; 6 large subunits form a core ring with 6 small subunits projecting outwards. The cofactor is adenosylcob(III)alamin.

The protein resides in the bacterial microcompartment. It catalyses the reaction ethanolamine = acetaldehyde + NH4(+). It participates in amine and polyamine degradation; ethanolamine degradation. Functionally, catalyzes the deamination of various vicinal amino-alcohols to oxo compounds. Allows this organism to utilize ethanolamine as the sole source of nitrogen and carbon in the presence of external vitamin B12. The protein is Ethanolamine ammonia-lyase small subunit of Escherichia coli (strain UTI89 / UPEC).